A 464-amino-acid chain; its full sequence is MEKRNERQVILFPLPLQGCINPMLQLAKILYSRGFSITIIHTRFNAPKSSDHPLFTFLQIRDGLSESQTQSRDLLLQLTLLNNNCQIPFRECLAKLIKPSSDSGTEDRKISCVIDDSGWVFTQSVAESFNLPRFVLCAYKFSFFLGHFLVPQIRREGFLPVPDSEADDLVPEFPPLRKKDLSRIMGTSAQSKPLDAYLLKILDATKPASGIIVMSCKELDHDSLAESNKVFSIPIFPIGPFHIHDVPASSSSLLEPDQSCIPWLDMRETRSVVYVSLGSIASLNESDFLEIACGLRNTNQSFLWVVRPGSVHGRDWIESLPSGFMESLDGKGKIVRWAPQLDVLAHRATGGFLTHNGWNSTLESICEGVPMICLPCKWDQFVNARFISEVWRVGIHLEGRIERREIERAVIRLMVESKGEEIRGRIKVLRDEVRRSVKQGGSSYRSLDELVDRISIIIEPLVPT.

UDP-alpha-D-glucose-binding positions include Ser-279, 338–340 (APQ), 355–363 (HNGWNSTLE), and 377–380 (KWDQ).

This sequence belongs to the UDP-glycosyltransferase family.

With respect to regulation, inhibited by olomoucine and 3-isobutyl-1-methylxanthine. Its function is as follows. Involved in the N-glucosylation of cytokinins. Catalyzes the formation of both the 7-N and the 9-N-glucosides. The protein is UDP-glycosyltransferase 76C1 (UGT76C1) of Arabidopsis thaliana (Mouse-ear cress).